The chain runs to 2359 residues: Pre-mRNA-processing-splicing factor 8B (2359 aa).

A disordered region spans residues 1–50; the sequence is MWNIDGTSLAPPGTDGSRMQTPSHPADHPSYTAPSNRNTPTVPTPEDAEA. Over residues 32-41 the composition is skewed to polar residues; that stretch reads TAPSNRNTPT. The MPN domain maps to 2129–2260; it reads TYIMPKNILK…LTSYKLTQAG (132 aa).

It localises to the nucleus. Functions as a scaffold that mediates the ordered assembly of spliceosomal proteins and snRNAs. Required for the assembly of the U4/U6-U5 tri-snRNP complex. In Arabidopsis thaliana (Mouse-ear cress), this protein is Pre-mRNA-processing-splicing factor 8B.